The primary structure comprises 1175 residues: Major DNA-binding protein (1175 aa).

A zinc finger spans residues 496–509 (CSLCDRASRPACAH). Residues 825–826 (FW) carry the Required for filament formation motif. The tract at residues 1151 to 1175 (KRPPPEDDLFDMGAPPEKRLTFDML) is required for nuclear localization.

It belongs to the herpesviridae major DNA-binding protein family. As to quaternary structure, homooligomers. Forms double-helical filaments necessary for the formation of replication compartments within the host nucleus. Interacts with the origin-binding protein. Interacts with the helicase primase complex; this interaction stimulates primer synthesis activity of the helicase-primase complex. Interacts with the DNA polymerase. Interacts with the alkaline exonuclease; this interaction increases its nuclease processivity.

Its subcellular location is the host nucleus. Functionally, plays several crucial roles in viral infection. Participates in the opening of the viral DNA origin to initiate replication by interacting with the origin-binding protein. May disrupt loops, hairpins and other secondary structures present on ssDNA to reduce and eliminate pausing of viral DNA polymerase at specific sites during elongation. Promotes viral DNA recombination by performing strand-transfer, characterized by the ability to transfer a DNA strand from a linear duplex to a complementary single-stranded DNA circle. Can also catalyze the renaturation of complementary single strands. Additionally, reorganizes the host cell nucleus, leading to the formation of prereplicative sites and replication compartments. This process is driven by the protein which can form double-helical filaments in the absence of DNA. The chain is Major DNA-binding protein from Suid herpesvirus 1 (SuHV-1).